Consider the following 671-residue polypeptide: DNA ligase (671 aa).

NAD(+)-binding positions include 32–36 (DAEYD), 81–82 (SL), and glutamate 113. Catalysis depends on lysine 115, which acts as the N6-AMP-lysine intermediate. Residues arginine 136, glutamate 173, lysine 290, and lysine 314 each contribute to the NAD(+) site. The Zn(2+) site is built by cysteine 408, cysteine 411, cysteine 426, and cysteine 432. A BRCT domain is found at 593-671 (EIDSPFAGKT…EAEMLRLLGV (79 aa)).

The protein belongs to the NAD-dependent DNA ligase family. LigA subfamily. Requires Mg(2+) as cofactor. Mn(2+) serves as cofactor.

It carries out the reaction NAD(+) + (deoxyribonucleotide)n-3'-hydroxyl + 5'-phospho-(deoxyribonucleotide)m = (deoxyribonucleotide)n+m + AMP + beta-nicotinamide D-nucleotide.. In terms of biological role, DNA ligase that catalyzes the formation of phosphodiester linkages between 5'-phosphoryl and 3'-hydroxyl groups in double-stranded DNA using NAD as a coenzyme and as the energy source for the reaction. It is essential for DNA replication and repair of damaged DNA. This Salmonella arizonae (strain ATCC BAA-731 / CDC346-86 / RSK2980) protein is DNA ligase.